We begin with the raw amino-acid sequence, 91 residues long: Small ribosomal subunit protein uS7 (91 aa).

It belongs to the universal ribosomal protein uS7 family. In terms of assembly, part of the 30S ribosomal subunit. Contacts proteins S9 and S11.

In terms of biological role, one of the primary rRNA binding proteins, it binds directly to 16S rRNA where it nucleates assembly of the head domain of the 30S subunit. Is located at the subunit interface close to the decoding center, probably blocks exit of the E-site tRNA. The sequence is that of Small ribosomal subunit protein uS7 (rpsG) from Apple proliferation phytoplasma.